Here is a 423-residue protein sequence, read N- to C-terminus: Zinc finger and BTB domain-containing protein 6 (423 aa).

A BTB domain is found at 33–97; that stretch reads CDVSIYINDT…CYTGALEVKR (65 aa). S201 is modified (phosphoserine). C2H2-type zinc fingers lie at residues 300–322, 325–347, 353–375, and 381–404; these read HQCP…LKMH, FLCL…IRGH, FQCT…LNIH, and YKCH…TSVH.

The protein resides in the nucleus. Its function is as follows. May be involved in transcriptional regulation. The sequence is that of Zinc finger and BTB domain-containing protein 6 (Zbtb6) from Mus musculus (Mouse).